The primary structure comprises 274 residues: Ribosomal RNA small subunit methyltransferase A (274 aa).

S-adenosyl-L-methionine is bound by residues Asn17, Leu19, Gly44, Glu65, Asp89, and Asn111.

This sequence belongs to the class I-like SAM-binding methyltransferase superfamily. rRNA adenine N(6)-methyltransferase family. RsmA subfamily.

It is found in the cytoplasm. The enzyme catalyses adenosine(1518)/adenosine(1519) in 16S rRNA + 4 S-adenosyl-L-methionine = N(6)-dimethyladenosine(1518)/N(6)-dimethyladenosine(1519) in 16S rRNA + 4 S-adenosyl-L-homocysteine + 4 H(+). Its function is as follows. Specifically dimethylates two adjacent adenosines (A1518 and A1519) in the loop of a conserved hairpin near the 3'-end of 16S rRNA in the 30S particle. May play a critical role in biogenesis of 30S subunits. This chain is Ribosomal RNA small subunit methyltransferase A, found in Buchnera aphidicola subsp. Schizaphis graminum (strain Sg).